Reading from the N-terminus, the 408-residue chain is Acetylornithine aminotransferase (408 aa).

Pyridoxal 5'-phosphate-binding positions include 107 to 108 (GT) and F141. Position 144 (R144) interacts with N(2)-acetyl-L-ornithine. Residue 227–230 (DEIQ) coordinates pyridoxal 5'-phosphate. K256 bears the N6-(pyridoxal phosphate)lysine mark. N(2)-acetyl-L-ornithine is bound at residue T284. Residue T285 coordinates pyridoxal 5'-phosphate.

Belongs to the class-III pyridoxal-phosphate-dependent aminotransferase family. ArgD subfamily. In terms of assembly, homodimer. It depends on pyridoxal 5'-phosphate as a cofactor.

It localises to the cytoplasm. The catalysed reaction is N(2)-acetyl-L-ornithine + 2-oxoglutarate = N-acetyl-L-glutamate 5-semialdehyde + L-glutamate. It participates in amino-acid biosynthesis; L-arginine biosynthesis; N(2)-acetyl-L-ornithine from L-glutamate: step 4/4. The protein is Acetylornithine aminotransferase of Xanthomonas axonopodis pv. citri (strain 306).